A 20-amino-acid polypeptide reads, in one-letter code: Expansin-B (20 aa).

Residues 1-20 (GPPKVAPGKXISASFGGEWL) form a disordered region.

Belongs to the expansin family. Expansin B subfamily.

The protein localises to the secreted. Its subcellular location is the cell wall. It is found in the membrane. Functionally, may aid fertilization by loosening the cell wall of the stigma and style, thereby facilitating penetration of the pollen tube. Acts selectively on grass cell walls, which are relatively poor in pectins and xyloglucans and rich in glucuronoarabinoxylans and (1-3),(1-4)-beta-D-glucans, when compared with cell walls of other angiosperms, including other monocots. This chain is Expansin-B, found in Paspalum notatum (Bahia grass).